The chain runs to 252 residues: Protein IRON-RELATED TRANSCRIPTION FACTOR 3 (252 aa).

Residues 36-49 (PRKVHKSEREKLKR) are basic motif. Residues 36 to 86 (PRKVHKSEREKLKRGHLNDLFGELGNMLEADRQSNGKACILTDTTRILRDL) enclose the bHLH domain. The tract at residues 50 to 86 (GHLNDLFGELGNMLEADRQSNGKACILTDTTRILRDL) is helix-loop-helix motif. Positions 76 to 131 (LTDTTRILRDLLSQVKSLRQENSTLQNESNYVTMERNELQDENGALRSEISDLQNE) form a coiled coil. The segment at 135–252 (RATGSPGWGH…GLPRMEDEQM (118 aa)) is disordered. Low complexity predominate over residues 162-176 (PSQQPMQPSPMTTST). Acidic residues predominate over residues 208–219 (PAEDPEPSEDQE).

It belongs to the bHLH protein family.

The protein resides in the nucleus. Its function is as follows. Transcription factor that acts as a negative regulator of the iron deficiency response. Suppresses the induction of iron deficiency responsive genes, such as NAS1, NAS2, IRO2, IRT1, YSL15, and NRAMP1. This Oryza sativa subsp. japonica (Rice) protein is Protein IRON-RELATED TRANSCRIPTION FACTOR 3.